The following is a 262-amino-acid chain: Pyridoxine 5'-phosphate synthase (262 aa).

Asparagine 6 is a binding site for 3-amino-2-oxopropyl phosphate. Aspartate 8–histidine 9 contributes to the 1-deoxy-D-xylulose 5-phosphate binding site. Arginine 17 provides a ligand contact to 3-amino-2-oxopropyl phosphate. The active-site Proton acceptor is the histidine 43. 1-deoxy-D-xylulose 5-phosphate is bound by residues arginine 45 and histidine 50. Glutamate 70 functions as the Proton acceptor in the catalytic mechanism. Threonine 102 lines the 1-deoxy-D-xylulose 5-phosphate pocket. Histidine 215 serves as the catalytic Proton donor. 3-amino-2-oxopropyl phosphate is bound by residues glycine 216 and glycine 237–histidine 238.

Belongs to the PNP synthase family. In terms of assembly, homooctamer; tetramer of dimers.

It is found in the cytoplasm. It catalyses the reaction 3-amino-2-oxopropyl phosphate + 1-deoxy-D-xylulose 5-phosphate = pyridoxine 5'-phosphate + phosphate + 2 H2O + H(+). The protein operates within cofactor biosynthesis; pyridoxine 5'-phosphate biosynthesis; pyridoxine 5'-phosphate from D-erythrose 4-phosphate: step 5/5. In terms of biological role, catalyzes the complicated ring closure reaction between the two acyclic compounds 1-deoxy-D-xylulose-5-phosphate (DXP) and 3-amino-2-oxopropyl phosphate (1-amino-acetone-3-phosphate or AAP) to form pyridoxine 5'-phosphate (PNP) and inorganic phosphate. The chain is Pyridoxine 5'-phosphate synthase from Helicobacter pylori (strain G27).